We begin with the raw amino-acid sequence, 1437 residues long: CRISPR-associated endoribonuclease Cas13a (1437 aa).

HEPN-like fold stretches follow at residues 460-626 (LNAS…AMFE) and 1101-1437 (EFRD…QLKN). Residues 1377 to 1419 (EVKEKKKPSDNNTGKGYSKRDRQQDRKEYDKYKEKKKKEGNFL) form a disordered region. Positions 1394 to 1416 (SKRDRQQDRKEYDKYKEKKKKEG) are enriched in basic and acidic residues.

Belongs to the CRISPR-associated endoribonuclease Cas13a family. The cofactor is a divalent metal cation.

With respect to regulation, target RNA acts as an activator for non-specific ssRNA degradation. Its function is as follows. CRISPR (clustered regularly interspaced short palindromic repeat), is an adaptive immune system that provides protection against mobile genetic elements (viruses, transposable elements and conjugative plasmids). CRISPR clusters contain sequences complementary to antecedent mobile elements and target invading nucleic acids. Unlike many single-component effectors, this CRISPR-Cas system targets RNA. CRISPR clusters are transcribed from pre-CRISPR RNA (crRNA) and processed into crRNA by this protein. Cleaves linear target ssRNA in a pre-crRNA-dependent fashion, preferentially around A residues. Binding a viable target RNA target activates this protein for non-specific RNA degradation in vitro (called collateral RNA degradation), but it is not very sensitive as it requires nanomolar levels of viable target RNA. The chain is CRISPR-associated endoribonuclease Cas13a from Lachnospiraceae bacterium (strain NK4A179).